Here is a 76-residue protein sequence, read N- to C-terminus: MQARVFLLLLGVILLGMMGPMVSAQDGKAGSCPDVNQPIPPLGVCKTTCATDSNCPDIQKCCKNGCGHMSCTRPST.

The signal sequence occupies residues 1-24 (MQARVFLLLLGVILLGMMGPMVSA). A WAP domain is found at 25–75 (QDGKAGSCPDVNQPIPPLGVCKTTCATDSNCPDIQKCCKNGCGHMSCTRPS). Cystine bridges form between Cys32–Cys62, Cys45–Cys66, Cys49–Cys61, and Cys55–Cys71.

This sequence belongs to the venom waprin family. Expressed by the venom gland.

It localises to the secreted. In terms of biological role, damages membranes of susceptible bacteria. Has no hemolytic activity. Not toxic to mice. Does not inhibit the proteinases elastase and cathepsin G. The protein is Waprin-Rha1 of Rhabdophis tigrinus tigrinus (Tiger keelback snake).